A 289-amino-acid polypeptide reads, in one-letter code: ATP synthase gamma chain (289 aa).

The protein belongs to the ATPase gamma chain family. As to quaternary structure, F-type ATPases have 2 components, CF(1) - the catalytic core - and CF(0) - the membrane proton channel. CF(1) has five subunits: alpha(3), beta(3), gamma(1), delta(1), epsilon(1). CF(0) has three main subunits: a, b and c.

It is found in the cell membrane. Its function is as follows. Produces ATP from ADP in the presence of a proton gradient across the membrane. The gamma chain is believed to be important in regulating ATPase activity and the flow of protons through the CF(0) complex. The polypeptide is ATP synthase gamma chain (Lactococcus lactis subsp. lactis (strain IL1403) (Streptococcus lactis)).